Consider the following 103-residue polypeptide: Small ribosomal subunit protein uS10 (103 aa).

This sequence belongs to the universal ribosomal protein uS10 family. As to quaternary structure, part of the 30S ribosomal subunit.

Its function is as follows. Involved in the binding of tRNA to the ribosomes. This is Small ribosomal subunit protein uS10 from Picrophilus torridus (strain ATCC 700027 / DSM 9790 / JCM 10055 / NBRC 100828 / KAW 2/3).